A 357-amino-acid chain; its full sequence is GTPase Obg (357 aa).

In terms of domain architecture, Obg spans 1–159; it reads MKFVDEAEIQ…RTLKLELKLL (159 aa). Residues 160 to 343 form the OBG-type G domain; that stretch reads ADIGMLGFPN…IMKSAMTLFE (184 aa). GTP contacts are provided by residues 166–173, 191–195, 213–216, 293–296, and 324–326; these read GFPNVGKS, FTTLY, DVPG, NKAD, and SAV. Positions 173 and 193 each coordinate Mg(2+).

This sequence belongs to the TRAFAC class OBG-HflX-like GTPase superfamily. OBG GTPase family. As to quaternary structure, monomer. It depends on Mg(2+) as a cofactor.

The protein localises to the cytoplasm. In terms of biological role, an essential GTPase which binds GTP, GDP and possibly (p)ppGpp with moderate affinity, with high nucleotide exchange rates and a fairly low GTP hydrolysis rate. Plays a role in control of the cell cycle, stress response, ribosome biogenesis and in those bacteria that undergo differentiation, in morphogenesis control. This chain is GTPase Obg, found in Xylella fastidiosa (strain M23).